Reading from the N-terminus, the 425-residue chain is Pleckstrin homology domain-containing family A member 2 (425 aa).

One can recognise a PH 1 domain in the interval 7-113; sequence QNRICGFLDI…WVEALNQASK (107 aa). Lys141 participates in a covalent cross-link: Glycyl lysine isopeptide (Lys-Gly) (interchain with G-Cter in SUMO2). Ser184 bears the Phosphoserine mark. The PH 2 domain occupies 198–298; the sequence is PLIKSGYCVK…WIKEIGAAVQ (101 aa). 2 positions are modified to phosphoserine: Ser314 and Ser349. The disordered stretch occupies residues 374–410; it reads AEDSLFTPRLGESSTSAVLPSSRIRHRSEPQHPKEKP. The segment covering 400-410 has biased composition (basic and acidic residues); it reads RSEPQHPKEKP.

In terms of assembly, binds MPDZ and PTPN13.

The protein resides in the cytoplasm. The protein localises to the cell membrane. It localises to the nucleus. Binds specifically to phosphatidylinositol 3,4-diphosphate (PtdIns3,4P2), but not to other phosphoinositides. May recruit other proteins to the plasma membrane. The polypeptide is Pleckstrin homology domain-containing family A member 2 (PLEKHA2) (Bos taurus (Bovine)).